A 207-amino-acid chain; its full sequence is Ion-translocating oxidoreductase complex subunit B (207 aa).

A hydrophobic region spans residues 1-29; the sequence is MLDLSIIAYLLIAICLIALIFGALLGYFS. One can recognise a 4Fe-4S domain in the interval 35–93; the sequence is EADPIVDQIDAILPQSQCGQCGYPGCKPYAEAIANGDQITKCVPGGQPLVVKIAELMGV. Residues C52, C55, C60, C76, C116, C119, C122, C126, C146, C149, C152, and C156 each coordinate [4Fe-4S] cluster. 4Fe-4S ferredoxin-type domains follow at residues 107-136 and 137-166; these read KVAL…GTNK and AMHT…MIKV.

The protein belongs to the 4Fe4S bacterial-type ferredoxin family. RnfB subfamily. The complex is composed of six subunits: RnfA, RnfB, RnfC, RnfD, RnfE and RnfG. [4Fe-4S] cluster serves as cofactor.

The protein localises to the cell inner membrane. Part of a membrane-bound complex that couples electron transfer with translocation of ions across the membrane. The protein is Ion-translocating oxidoreductase complex subunit B of Haemophilus ducreyi (strain 35000HP / ATCC 700724).